A 284-amino-acid polypeptide reads, in one-letter code: 4-hydroxybenzoate octaprenyltransferase (284 aa).

Transmembrane regions (helical) follow at residues 19–39 (IPIL…SHGL), 42–62 (ISYL…GCII), 85–105 (GQLS…VAFI), 107–127 (VLFL…LAIL), 134–154 (FFAI…FMAF), 165–185 (AWIF…IYAL), 211–231 (ILLF…YCDF), 233–253 (SFFY…YFLY), and 261–281 (CINA…MAVI).

The protein belongs to the UbiA prenyltransferase family. Mg(2+) is required as a cofactor.

The protein resides in the cell inner membrane. The enzyme catalyses all-trans-octaprenyl diphosphate + 4-hydroxybenzoate = 4-hydroxy-3-(all-trans-octaprenyl)benzoate + diphosphate. It functions in the pathway cofactor biosynthesis; ubiquinone biosynthesis. Catalyzes the prenylation of para-hydroxybenzoate (PHB) with an all-trans polyprenyl group. Mediates the second step in the final reaction sequence of ubiquinone-8 (UQ-8) biosynthesis, which is the condensation of the polyisoprenoid side chain with PHB, generating the first membrane-bound Q intermediate 3-octaprenyl-4-hydroxybenzoate. This is 4-hydroxybenzoate octaprenyltransferase from Francisella tularensis subsp. novicida (strain U112).